The sequence spans 308 residues: MPNYEKVEFQTLDGLTLRGRLFRAEGAGGNRTAAVVITPPYVIVQDVMVSDIAVYFSQQGITALTYDTRSFGESDGQPRCELDLSKQVDDYSDAFTFLASLPSVDPSKIGFWGISFCATVALNAAALDRRSRFVISVGPIVKASDENPYPIDKVHRVLTKALRDRESQLRGNTPFYVESTCEDGSNPTGFGPELGIEAYELVQRIAASGIAPNFSTQLTLQSFAKILRWHPMQDIKWLGETPMMLMIPGDDTVSLPEEQMRLFDMITGPKRVEVAAGKSHFNVLASEGFEGLMDMQVEFIKQTLGLSS.

An abhydrolase domain region spans residues S50–H280.

It belongs to the polyketide transferase af380 family.

It participates in secondary metabolite biosynthesis. Polyketide transferase; part of the cla gene cluster that produces clavatol and ortho-quinone methide. The clavatol biosynthesis cluster cla and the terrestric acid cluster tra are both involved in the production of peniphenones and penilactones. The non-reducing PKS claF is responsible for the formation of clavatol from successive condensations of 3 malonyl-CoA units, presumably with a simple acetyl-CoA starter unit, and 2 methylation steps. The esterase claE probably collaborates with claF by catalyzing the hydrolysis of ACP-bound acyl intermediates to free the ACP from stalled intermediates. The clavatol oxidase claD then converts clavatol to hydroxyclavatol. Spontaneous dehydration of hydroxyclavatol leads to the accumulation of the highly active ortho-quinone methide. On the other hand, the PKS-NRPS hybrid traA is involved in the formation of crustosic acid, with the help of traB and traD. The polyketide synthase module (PKS) of traA is responsible for the synthesis of the polyketide backbone via the condensation of an acetyl-CoA starter unit with 3 malonyl-CoA units. The downstream nonribosomal peptide synthetase (NRPS) module then amidates the carboxyl end of the polyketide with L-malic acid. Because traA lacks a designated enoylreductase (ER) domain, the required activity is provided the enoyl reductase traG. Crustosic acid undergoes decarboxylation and isomerization to the terrestric acid, catalyzed by the 2-oxoglutarate-dependent dioxygenase traH. Both acids are further converted to the 2 gamma-butyrolactones (R)-5-methyltetronic acid and (S)-5-carboxylmethyltetronic acid, with involvement of the cytochrome P450 monooxygenase claJ. Spontaneous addition of the methide to these gamma-butyrolactones leads to peniphenone D and penilactone D, which undergo again stereospecific attacking by methide to give penilactones A and B. The function of the polyketide transferase claH has not been investigated yet. The protein is Polyketide transferase claH of Penicillium crustosum (Blue mold fungus).